Here is a 679-residue protein sequence, read N- to C-terminus: Methionine--tRNA ligase (679 aa).

Positions 14 to 24 (PYANGSIHLGH) match the 'HIGH' region motif. Zn(2+)-binding residues include Cys145, Cys148, Cys158, and Cys161. The 'KMSKS' region motif lies at 331–335 (KMSKS). Lys334 is an ATP binding site. The tRNA-binding domain maps to 577–679 (TFAAVDLRVA…SGAKPGQRIK (103 aa)).

This sequence belongs to the class-I aminoacyl-tRNA synthetase family. MetG type 1 subfamily. Homodimer. Zn(2+) serves as cofactor.

The protein resides in the cytoplasm. It catalyses the reaction tRNA(Met) + L-methionine + ATP = L-methionyl-tRNA(Met) + AMP + diphosphate. Is required not only for elongation of protein synthesis but also for the initiation of all mRNA translation through initiator tRNA(fMet) aminoacylation. This is Methionine--tRNA ligase from Pseudomonas putida (strain GB-1).